Consider the following 300-residue polypeptide: Protein XRI1 (300 aa).

As to quaternary structure, interacts (via C-terminal domain) with MIP1.

Its subcellular location is the nucleus. In terms of biological role, required for mitotic division of the generative cell nucleus and the development of mature tricellular pollen grains, and for male and female meiosis. This Arabidopsis thaliana (Mouse-ear cress) protein is Protein XRI1 (XRI1).